The primary structure comprises 170 residues: Sec-independent protein translocase protein TATA, chloroplastic (170 aa).

A chloroplast-targeting transit peptide spans 1-61; that stretch reads MGIPVVVPVA…GGSGGDLAAV (61 aa). Over 62 to 84 the chain is Lumenal; it reads AASVAARPRRAGSGGGGALGCKC. A helical membrane pass occupies residues 85–105; sequence LFGLGVPELAVIAGVAALVFG. Residues 106 to 170 lie on the Stromal side of the membrane; it reads PKQLPEIGRS…LEASSSKESA (65 aa). A compositionally biased stretch (basic and acidic residues) spans 130–139; sequence FETELKKEPG. The disordered stretch occupies residues 130 to 170; sequence FETELKKEPGEGGDQPPPATPTAVSGGEEKGLEASSSKESA.

It belongs to the TatA/E family. In terms of assembly, in thylakoid membranes, TATC and TATB form a large receptor complex, containing about eight TATC-TATB pairs, which binds the precursor protein. Twin arginine signal peptide promotes pH-triggered docking of TATA oligomers to TATC-TATB receptor complex, inducing a conformational switch of TATA that results in activation of the translocase. TATA dissociates from TATC-TATB upon completion of translocation.

Its subcellular location is the plastid. The protein localises to the chloroplast thylakoid membrane. In terms of biological role, part of the twin-arginine translocation (Tat) system that transports large folded proteins containing a characteristic twin-arginine motif in their signal peptide across the thylakoid membrane. Involved in delta pH-dependent protein transport required for chloroplast development, especially thylakoid membrane formation. TATC and TATB mediate precursor recognition, whereas TATA facilitates translocation. This Zea mays (Maize) protein is Sec-independent protein translocase protein TATA, chloroplastic.